The following is a 441-amino-acid chain: Amino-acid acetyltransferase (441 aa).

An N-acetyltransferase domain is found at 295–434; it reads EQVRRATIND…QALYNYQRRS (140 aa).

Belongs to the acetyltransferase family. ArgA subfamily. As to quaternary structure, homohexamer.

The protein resides in the cytoplasm. It carries out the reaction L-glutamate + acetyl-CoA = N-acetyl-L-glutamate + CoA + H(+). The protein operates within amino-acid biosynthesis; L-arginine biosynthesis; N(2)-acetyl-L-ornithine from L-glutamate: step 1/4. The sequence is that of Amino-acid acetyltransferase from Pectobacterium atrosepticum (strain SCRI 1043 / ATCC BAA-672) (Erwinia carotovora subsp. atroseptica).